A 170-amino-acid polypeptide reads, in one-letter code: 2-oxo-4-hydroxy-4-carboxy-5-ureidoimidazoline decarboxylase (170 aa).

His67 acts as the Proton donor in catalysis. Substrate-binding positions include Pro68, 84–88, and 119–123; these read SQREQ and FVLAL.

The protein belongs to the OHCU decarboxylase family.

It is found in the peroxisome. It carries out the reaction 5-hydroxy-2-oxo-4-ureido-2,5-dihydro-1H-imidazole-5-carboxylate + H(+) = (S)-allantoin + CO2. It functions in the pathway purine metabolism; urate degradation; (S)-allantoin from urate: step 3/3. Functionally, catalyzes the stereoselective decarboxylation of 2-oxo-4-hydroxy-4-carboxy-5-ureidoimidazoline (OHCU) to (S)-allantoin. The protein is 2-oxo-4-hydroxy-4-carboxy-5-ureidoimidazoline decarboxylase (URAD) of Bos taurus (Bovine).